Consider the following 37-residue polypeptide: Small ribosomal subunit protein eS32 (37 aa).

Belongs to the eukaryotic ribosomal protein eS32 family. Part of the small ribosomal subunit.

This is Small ribosomal subunit protein eS32 from Pyrococcus furiosus (strain ATCC 43587 / DSM 3638 / JCM 8422 / Vc1).